A 134-amino-acid chain; its full sequence is Ribonuclease VapC40 (134 aa).

One can recognise a PINc domain in the interval Ala-3–Leu-126. 2 residues coordinate Mg(2+): Asp-5 and Asp-98.

The protein belongs to the PINc/VapC protein family. It depends on Mg(2+) as a cofactor.

Functionally, toxic component of a type II toxin-antitoxin (TA) system. An RNase. Its cognate antitoxin is VapB40. This chain is Ribonuclease VapC40, found in Mycobacterium tuberculosis (strain CDC 1551 / Oshkosh).